A 280-amino-acid polypeptide reads, in one-letter code: Nocamycin O-methyltransferase (280 aa).

Belongs to the methyltransferase superfamily.

It carries out the reaction nocamycin E + S-adenosyl-L-methionine = nocamycin I + S-adenosyl-L-homocysteine. It participates in antibiotic biosynthesis. Involved in the biosynthesis of nocamycin I and nocamycin II. Catalyzes the methylation of nocamycin E to yield nocamycin I. The chain is Nocamycin O-methyltransferase from Saccharothrix syringae (Nocardiopsis syringae).